Consider the following 601-residue polypeptide: MVLWGFFLRFRFFLTCGRNCIQKTLDSQDDAKDPGLHTFSHTHMRKAFLLMNDLRSHSRKMLCDVLLVAGEVEIPAHRVVLASCSPYFCAMFTGDMSESKANHVEIRDVDGQTLLKLVDYIYSAEIEVSEENVQVLLPAASLLQLMDVRQVCCDFLQTQLHPTNCLGIRAFADLHACTVLLSQAHAYAAEQHFTDVMVGEEFMALSLQQVCSLISSDKLTVSTEEKVFEAMVAWIKHDKEARLEHMPKLMEHVRLPLLSRDYLVQIVEEEPLIKNNNTCKDFLIEAMKYHLLPADQRHLIKTDRTRPRTPISLPKVMMVVGGQAPKAIRSVECYDFQEDRWYQVADLPSRRCRAGVVYMAGKVYAVGGFNGSLRVRTVDVYDGLKDQWSSIPSMQERRSTLGAAVLGDLLYAVGGFDGSTGLSSVEAYNPKANEWMFVAPMNTRRSSVGVGVVDGKLYAVGGYDGASRQCLSTVEEFNPVSNKWCYVSDMSTRRSGAGVGVLSGQLYAAGGHDGPLVRKSVEVYDPTTNTWRQVCDMNMCRRNAGVCAINGLLYVIGGDDGSCNLSSVEYYDPAADKWSLIPTNMSNGRSYAGVSVIDKPL.

Residues 63 to 130 form the BTB domain; it reads CDVLLVAGEV…IYSAEIEVSE (68 aa). Positions 165–268 constitute a BACK domain; that stretch reads CLGIRAFADL…SRDYLVQIVE (104 aa). Kelch repeat units lie at residues 316–361, 362–408, 410–455, 456–504, 505–551, and 553–599; these read VMMV…YMAG, KVYA…VLGD, LYAV…VVDG, KLYA…VLSG, QLYA…AING, and LYVI…VIDK.

Belongs to the KLHL3 family. Component of the BCR(KLHL3) E3 ubiquitin ligase complex, at least composed of cul3 and klhl3 and rbx1.

The protein resides in the cytoplasm. The protein localises to the cytoskeleton. Its subcellular location is the cytosol. The protein operates within protein modification; protein ubiquitination. Substrate-specific adapter of a BCR (BTB-CUL3-RBX1) E3 ubiquitin ligase complex that acts as a regulator of ion transport in the distal nephron. The BCR(KLHL3) complex acts by mediating ubiquitination and degradation of WNK1 and WNK4, two activators of Na-Cl cotransporter SLC12A3/NCC in distal convoluted tubule cells of kidney, thereby regulating NaCl reabsorption. The chain is Kelch-like protein 3 (klhl3) from Danio rerio (Zebrafish).